The sequence spans 383 residues: uncharacterized protein (383 aa).

It belongs to the peptidase M20 family.

This is an uncharacterized protein from Staphylococcus epidermidis (strain ATCC 35984 / DSM 28319 / BCRC 17069 / CCUG 31568 / BM 3577 / RP62A).